Consider the following 64-residue polypeptide: MPKMKTKSGAAKRFLKTASGFKHKHAFKSHILTKMSTKRKRQLRGASLLHPSDVAKVERMLRVR.

Belongs to the bacterial ribosomal protein bL35 family.

The protein is Large ribosomal subunit protein bL35 of Pseudomonas entomophila (strain L48).